A 399-amino-acid chain; its full sequence is Glutathione S-transferase LANCL1 (399 aa).

Ala-2 is modified (N-acetylalanine). N6-acetyllysine is present on Lys-142. Residue Cys-276 participates in Zn(2+) binding. Lys-317 contributes to the glutathione binding site. Positions 322 and 323 each coordinate Zn(2+). 364-367 (RTPD) is a binding site for glutathione.

It belongs to the LanC-like protein family. In terms of assembly, interacts with the C-terminal of STOM. Interacts with the EPS8 SH3 domain. Interaction with EPS8 is inhibited by glutathione binding. As to quaternary structure, (Microbial infection) Interacts with P.falciparum SBP1. In terms of tissue distribution, detected in erythrocytes, brain, kidney, testis, ovary, heart, lung, placenta and spleen (at protein level). Ubiquitous. Strongly expressed in brain, spinal cord, pituitary gland, kidney, heart, skeletal muscle, pancreas, ovary and testis.

Its subcellular location is the cytoplasm. It is found in the cell membrane. It carries out the reaction RX + glutathione = an S-substituted glutathione + a halide anion + H(+). It catalyses the reaction 1-chloro-2,4-dinitrobenzene + glutathione = 2,4-dinitrophenyl-S-glutathione + chloride + H(+). Functionally, functions as a glutathione transferase. Catalyzes conjugation of the glutathione (GSH) to artificial substrates 1-chloro-2,4-dinitrobenzene (CDNB) and p-nitrophenyl acetate. Mitigates neuronal oxidative stress during normal postnatal development and in response to oxidative stresses probably through GSH antioxidant defense mechanism. May play a role in EPS8 signaling. Binds glutathione. The polypeptide is Glutathione S-transferase LANCL1 (Homo sapiens (Human)).